Reading from the N-terminus, the 486-residue chain is MADLGKKYCVNCLADVTNLRIRCAECQDIELCPECFSAGAEIGNHRRWHGYQQVDGGRFSLWGPEAEGGWTSREEQSLLDAIEQYGFGNWEDMAAHVGASRTPQEVMDHYVSMYIHGNLGKACIPDSIPNRVTDHTCPSGGPLSPSLTTPLPPLDITVVEQQQLGYMPLRDDYEIEYDQEAEKLISGLSVNYDDEDIEIEMKRAHVDMYVRKLRERQRRKNIARDYNLVPAFLGRDKKDKERERAGGTVGVGGPGGAVGSGSGATVVPAGPLGSSTAATPKRKITKEEKGQRTKLRALCQFMPQREFEEFFDNMHKERMLRAKVRELQRYRRNGITRLDESAEYEAARHKREKRKENKSIAGSKRGSSGGGGGTAGLGGGVGAGGGLGGGGGVSTIKEEGKDSEFSAIENLSGFELLSDREKVLCNSMNLSPMRYLTVKTIIIKDHLQKRQGIPSKSRLPSYLDKVLKKRILNFLSESGWISRDAS.

The ZZ-type zinc finger occupies Leu-4–Phe-59. Zn(2+) contacts are provided by Cys-9, Cys-12, Cys-23, Cys-26, Cys-32, Cys-35, His-45, and His-49. The SANT domain occupies Glu-65–Asn-118. 2 disordered regions span residues Lys-237 to Gln-291 and Glu-343 to Leu-377. Gly residues-rich tracts occupy residues Gly-247–Ser-262 and Ser-367–Leu-377.

The protein localises to the nucleus. Functionally, transcriptional coactivator. In Danio rerio (Zebrafish), this protein is Transcriptional adapter 2-beta (tada2b).